A 555-amino-acid chain; its full sequence is 2-succinyl-5-enolpyruvyl-6-hydroxy-3-cyclohexene-1-carboxylate synthase (555 aa).

Belongs to the TPP enzyme family. MenD subfamily. In terms of assembly, homodimer. The cofactor is Mg(2+). Mn(2+) is required as a cofactor. Requires thiamine diphosphate as cofactor.

It catalyses the reaction isochorismate + 2-oxoglutarate + H(+) = 5-enolpyruvoyl-6-hydroxy-2-succinyl-cyclohex-3-ene-1-carboxylate + CO2. It functions in the pathway quinol/quinone metabolism; 1,4-dihydroxy-2-naphthoate biosynthesis; 1,4-dihydroxy-2-naphthoate from chorismate: step 2/7. Its pathway is quinol/quinone metabolism; menaquinone biosynthesis. Functionally, catalyzes the thiamine diphosphate-dependent decarboxylation of 2-oxoglutarate and the subsequent addition of the resulting succinic semialdehyde-thiamine pyrophosphate anion to isochorismate to yield 2-succinyl-5-enolpyruvyl-6-hydroxy-3-cyclohexene-1-carboxylate (SEPHCHC). In Cronobacter sakazakii (strain ATCC BAA-894) (Enterobacter sakazakii), this protein is 2-succinyl-5-enolpyruvyl-6-hydroxy-3-cyclohexene-1-carboxylate synthase.